The chain runs to 119 residues: Beta-2-microglobulin (119 aa).

Positions 1 to 20 are cleaved as a signal peptide; that stretch reads MACFVVVALLVLLSLSGLEA. The 90-residue stretch at 25 to 114 folds into the Ig-like C1-type domain; that stretch reads PKIQVYSRHP…VTFSTPKTVK (90 aa). The cysteines at positions 45 and 100 are disulfide-linked.

It belongs to the beta-2-microglobulin family. In terms of assembly, heterodimer of an alpha chain and a beta chain. Beta-2-microglobulin is the beta-chain of major histocompatibility complex class I molecules.

The protein localises to the secreted. Its function is as follows. Component of the class I major histocompatibility complex (MHC). Involved in the presentation of peptide antigens to the immune system. This Leontopithecus chrysopygus (Golden-rumped lion tamarin) protein is Beta-2-microglobulin (B2M).